The primary structure comprises 305 residues: Acetylglutamate kinase (305 aa).

Residues Gly-75–Gly-76, Arg-97, and Asn-202 contribute to the substrate site.

Belongs to the acetylglutamate kinase family. ArgB subfamily.

It localises to the cytoplasm. The catalysed reaction is N-acetyl-L-glutamate + ATP = N-acetyl-L-glutamyl 5-phosphate + ADP. Its pathway is amino-acid biosynthesis; L-arginine biosynthesis; N(2)-acetyl-L-ornithine from L-glutamate: step 2/4. In terms of biological role, catalyzes the ATP-dependent phosphorylation of N-acetyl-L-glutamate. This Rhodospirillum centenum (strain ATCC 51521 / SW) protein is Acetylglutamate kinase.